Here is a 324-residue protein sequence, read N- to C-terminus: tRNA dimethylallyltransferase (324 aa).

17–24 (GPTASGKT) contacts ATP. Residue 19–24 (TASGKT) participates in substrate binding. Interaction with substrate tRNA stretches follow at residues 42–45 (DSAL), 166–170 (QRIQR), 251–256 (RCVGYR), and 284–291 (KRQITWLR).

This sequence belongs to the IPP transferase family. In terms of assembly, monomer. Mg(2+) is required as a cofactor.

It carries out the reaction adenosine(37) in tRNA + dimethylallyl diphosphate = N(6)-dimethylallyladenosine(37) in tRNA + diphosphate. Its function is as follows. Catalyzes the transfer of a dimethylallyl group onto the adenine at position 37 in tRNAs that read codons beginning with uridine, leading to the formation of N6-(dimethylallyl)adenosine (i(6)A). The polypeptide is tRNA dimethylallyltransferase (Burkholderia vietnamiensis (strain G4 / LMG 22486) (Burkholderia cepacia (strain R1808))).